The following is a 1315-amino-acid chain: Probable nucleoporin C890.06 (1315 aa).

Belongs to the non-repetitive/WGA-negative nucleoporin family.

It is found in the cytoplasm. Its subcellular location is the nucleus. The sequence is that of Probable nucleoporin C890.06 from Schizosaccharomyces pombe (strain 972 / ATCC 24843) (Fission yeast).